The sequence spans 390 residues: Succinate--CoA ligase [ADP-forming] subunit beta (390 aa).

The region spanning 9–244 (KEIFRKYGVP…LDEEEPTEVE (236 aa)) is the ATP-grasp domain. Residues lysine 46, 53 to 55 (GRG), glutamate 99, alanine 102, and glutamate 107 each bind ATP. Residues asparagine 199 and aspartate 213 each contribute to the Mg(2+) site. Residues asparagine 264 and 321 to 323 (GIV) each bind substrate.

It belongs to the succinate/malate CoA ligase beta subunit family. As to quaternary structure, heterotetramer of two alpha and two beta subunits. The cofactor is Mg(2+).

It carries out the reaction succinate + ATP + CoA = succinyl-CoA + ADP + phosphate. The enzyme catalyses GTP + succinate + CoA = succinyl-CoA + GDP + phosphate. It participates in carbohydrate metabolism; tricarboxylic acid cycle; succinate from succinyl-CoA (ligase route): step 1/1. Its function is as follows. Succinyl-CoA synthetase functions in the citric acid cycle (TCA), coupling the hydrolysis of succinyl-CoA to the synthesis of either ATP or GTP and thus represents the only step of substrate-level phosphorylation in the TCA. The beta subunit provides nucleotide specificity of the enzyme and binds the substrate succinate, while the binding sites for coenzyme A and phosphate are found in the alpha subunit. This chain is Succinate--CoA ligase [ADP-forming] subunit beta, found in Nautilia profundicola (strain ATCC BAA-1463 / DSM 18972 / AmH).